The following is a 588-amino-acid chain: MDLAVSNEDSQILLKDKNVLQETVLDKYRTSGQITQTALKFVTDLINDVYHYKKVQTPLSISELCLMADSFIVNRLEQYYKHKVNERGIALPTMIDVDAVASGWCPEVDDTENIKKWNNNSDETSPFASSITGYLRHGDVVKISLGCHIDGYTSQVTHTMVIYPTDETNTKPTGPLLGSKADAVAASHIASESVTALLACSLTPEKLPQSLRNANTNSVTGHQIRSVVDTIAKAYNCAVVPGSRVRRIRRFLAGQNEGIVAEKDYKGVVWTEAHQEANLLANTEVQDIVVANNQNKLVASSAIPSDDFSVDVGEVYLIDLKFCPLTDCQKKGLITLETVDSYTGKSHKKNQLIARSGAYVRDYAQSYTLKLKTARQLLTKIDKNGVYPLKLSHLSTDFPLTEFTAEESDAVKKDLRSFRLGMNEITNNFLCVETPIQVAKWVPWDHILNSTNKNGALSYDASAALTLPGHEIPLPKLGISGIKLKSLMNSTNEVMTLPVARECSTVILCGSDVSVSGKPELFRLTGGSKTAQPSWVHSARELNPADPVVQGIFNLAELSKDKRFGLTMRETQPMKKNINLASDTTMEM.

It belongs to the peptidase M24 family. In terms of assembly, component of the nucleoplasmic and cytoplasmic pre-60S ribosomal particles.

Its subcellular location is the cytoplasm. The protein resides in the nucleus. Its function is as follows. Probable metalloprotease involved in proper assembly of pre-ribosomal particles during the biogenesis of the 60S ribosomal subunit. Accompanies the pre-60S particles to the cytoplasm. This chain is Probable metalloprotease ARX1 (ARX1), found in Candida glabrata (strain ATCC 2001 / BCRC 20586 / JCM 3761 / NBRC 0622 / NRRL Y-65 / CBS 138) (Yeast).